We begin with the raw amino-acid sequence, 344 residues long: MARIIALDGAQGEGGGQILRSALSLSMITGQPFEMSGIRAGRAKPGLLRQHLTAVRAATEICGAQVNGDELGSQQLRFTPGPIRGGEYRFAIGSAGSCMLVLQTVLPALWFADGSSRVEVHGGTHNQAAPSADFICRVWEPLLARMGINQRTTLIKHGFYPAGGGAAATVVEPAASLRGLTLISRGETRRITAEALLASVPHHVGEREVATLEAHFPRAEKNVVALEGGCGPGNALSLMIQSEQLTELFAAFGVKGTSAEAVANQVAHEARRYLASPAAVGEHLADQLILPLALAGEGAFTVARASAHLLTNIAVVERFLPVTFNLEEAREMVQVMVSKKDSGS.

ATP-binding positions include Gln-103 and 283-287; that span reads HLADQ. His-308 acts as the Tele-AMP-histidine intermediate in catalysis.

This sequence belongs to the RNA 3'-terminal cyclase family. Type 1 subfamily.

The protein resides in the cytoplasm. The catalysed reaction is a 3'-end 3'-phospho-ribonucleotide-RNA + ATP = a 3'-end 2',3'-cyclophospho-ribonucleotide-RNA + AMP + diphosphate. Its function is as follows. Catalyzes the conversion of 3'-phosphate to a 2',3'-cyclic phosphodiester at the end of RNA. The mechanism of action of the enzyme occurs in 3 steps: (A) adenylation of the enzyme by ATP; (B) transfer of adenylate to an RNA-N3'P to produce RNA-N3'PP5'A; (C) and attack of the adjacent 2'-hydroxyl on the 3'-phosphorus in the diester linkage to produce the cyclic end product. The biological role of this enzyme is unknown but it is likely to function in some aspects of cellular RNA processing. The protein is RNA 3'-terminal phosphate cyclase of Salmonella agona (strain SL483).